The sequence spans 327 residues: Malate dehydrogenase (327 aa).

NAD(+) is bound by residues 20–25 (GAGRVG) and Asp44. 2 residues coordinate substrate: Arg93 and Arg99. NAD(+) contacts are provided by residues Asn106 and 129 to 131 (VTN). The substrate site is built by Asn131 and Arg162. His186 serves as the catalytic Proton acceptor.

Belongs to the LDH/MDH superfamily. MDH type 3 family.

The catalysed reaction is (S)-malate + NAD(+) = oxaloacetate + NADH + H(+). Functionally, catalyzes the reversible oxidation of malate to oxaloacetate. The protein is Malate dehydrogenase of Nostoc punctiforme (strain ATCC 29133 / PCC 73102).